Consider the following 309-residue polypeptide: Fructosamine-3-kinase (309 aa).

The residue at position 1 (methionine 1) is an N-acetylmethionine. Residue 89–91 (EHL) participates in ATP binding. Catalysis depends on aspartate 217, which acts as the Proton acceptor.

Belongs to the fructosamine kinase family. In terms of assembly, monomer. In terms of tissue distribution, expressed in red blood cells, brain, heart, kidney and muscle. Lower expression is observed in liver. Not expressed in lung, spleen, testis and thymus.

It catalyses the reaction N(6)-(D-fructosyl)-L-lysyl-[protein] + ATP = N(6)-(3-O-phospho-D-fructosyl)-L-lysyl-[protein] + ADP + H(+). It carries out the reaction N(6)-D-ribulosyl-L-lysyl-[protein] + ATP = N(6)-(3-O-phospho-D-ribulosyl)-L-lysyl-[protein] + ADP + H(+). The enzyme catalyses N(6)-(D-psicosyl)-L-lysyl-[protein] + ATP = N(6)-(3-O-phospho-D-psicosyl)-L-lysyl-[protein] + ADP + H(+). In terms of biological role, fructosamine-3-kinase involved in protein deglycation by mediating phosphorylation of fructoselysine residues on glycated proteins, to generate fructoselysine-3 phosphate. Fructoselysine-3 phosphate adducts are unstable and decompose under physiological conditions. Involved in intracellular deglycation in erythrocytes and pancreatic islets. Involved in the response to oxidative stress by mediating deglycation of NFE2L2/NRF2, glycation impairing NFE2L2/NRF2 function. Also able to phosphorylate psicosamines and ribulosamines. The sequence is that of Fructosamine-3-kinase from Mus musculus (Mouse).